The primary structure comprises 212 residues: uncharacterized protein (212 aa).

The N-terminal stretch at 1 to 18 is a signal peptide; sequence MIPLVALLVLLTLQASPG. The chain crosses the membrane as a helical span at residues 186–208; it reads IYRLATFFMVSLFVGSFVALVFV.

It to A.fulgidus AF_0540.

It localises to the membrane. This is an uncharacterized protein from Archaeoglobus fulgidus (strain ATCC 49558 / DSM 4304 / JCM 9628 / NBRC 100126 / VC-16).